Reading from the N-terminus, the 245-residue chain is Orotidine 5'-phosphate decarboxylase (245 aa).

Residues D22, K44, 71 to 80 (DLKFHDIPNT), T131, R192, Q201, G221, and R222 each bind substrate. The Proton donor role is filled by K73.

Belongs to the OMP decarboxylase family. Type 1 subfamily. Homodimer.

The catalysed reaction is orotidine 5'-phosphate + H(+) = UMP + CO2. The protein operates within pyrimidine metabolism; UMP biosynthesis via de novo pathway; UMP from orotate: step 2/2. Its function is as follows. Catalyzes the decarboxylation of orotidine 5'-monophosphate (OMP) to uridine 5'-monophosphate (UMP). This is Orotidine 5'-phosphate decarboxylase from Salmonella newport (strain SL254).